A 279-amino-acid chain; its full sequence is uncharacterized protein (279 aa).

Residues 1–31 (MLVQSRTLVTAILSCSLVFGTTVNGASVAIA) form the signal peptide.

This is an uncharacterized protein from Corynebacterium glutamicum (strain ATCC 13032 / DSM 20300 / JCM 1318 / BCRC 11384 / CCUG 27702 / LMG 3730 / NBRC 12168 / NCIMB 10025 / NRRL B-2784 / 534).